The following is a 126-amino-acid chain: Glycine cleavage system H protein (126 aa).

The region spanning Val22–Glu104 is the Lipoyl-binding domain. Position 63 is an N6-lipoyllysine (Lys63).

It belongs to the GcvH family. In terms of assembly, the glycine cleavage system is composed of four proteins: P, T, L and H. (R)-lipoate serves as cofactor.

Its function is as follows. The glycine cleavage system catalyzes the degradation of glycine. The H protein shuttles the methylamine group of glycine from the P protein to the T protein. Functionally, is also involved in protein lipoylation via its role as an octanoyl/lipoyl carrier protein intermediate. The sequence is that of Glycine cleavage system H protein from Staphylococcus aureus (strain MSSA476).